The chain runs to 163 residues: Glycine cleavage system H protein, mitochondrial (163 aa).

Residues 1 to 34 constitute a mitochondrion transit peptide; the sequence is MALRMWASSAANALGVSCAPKSHLLPALSLSRCF. Residues 56–137 form the Lipoyl-binding domain; that stretch reads VATIGITDHA…YEEGWMVKVK (82 aa). Lys-96 is modified (N6-lipoyllysine).

The protein belongs to the GcvH family. As to quaternary structure, the glycine cleavage system is composed of four proteins: P, T, L and H. Requires (R)-lipoate as cofactor.

It localises to the mitochondrion. Its function is as follows. The glycine cleavage system catalyzes the degradation of glycine. The H protein shuttles the methylamine group of glycine from the P protein to the T protein. In Mesembryanthemum crystallinum (Common ice plant), this protein is Glycine cleavage system H protein, mitochondrial (GDCSH).